The following is a 1021-amino-acid chain: Sodium/potassium-transporting ATPase subunit alpha-1 (1021 aa).

A propeptide spanning residues 1 to 5 (MGKGV) is cleaved from the precursor. The segment covering 1–11 (MGKGVGRDKYE) has biased composition (basic and acidic residues). Residues 1-36 (MGKGVGRDKYEPAAVSEHGDKKKAKKERDMDELKKE) are disordered. The Cytoplasmic segment spans residues 6–85 (GRDKYEPAAV…NALTPPPTTP (80 aa)). Residue Lys9 is modified to N6-acetyllysine. Tyr10 is modified (phosphotyrosine). Ser16 is modified (phosphoserine; by PKC). At Lys21 the chain carries N6-acetyllysine. The span at 26-36 (KERDMDELKKE) shows a compositional bias: basic and acidic residues. Phosphoserine is present on residues Ser38 and Ser45. Residues 80 to 82 (PPP) are phosphoinositide-3 kinase binding. A helical transmembrane segment spans residues 86–106 (EWVKFCRQLFGGFSMLLWIGA). Residues 107 to 129 (VLCFLAYGIQAATEEEPQNDNLY) are Extracellular-facing. Residues 130 to 150 (LGVVLSAVVIITGCFSYYQEA) form a helical membrane-spanning segment. The Cytoplasmic segment spans residues 151-286 (KSSKIMESFK…GGQTPIAAEI (136 aa)). The residue at position 226 (Ser226) is a Phosphoserine. Tyr258 carries the post-translational modification Phosphotyrosine. A helical membrane pass occupies residues 287-306 (EHFIHIITGVAVFLGVSFFI). Topologically, residues 307–318 (LSLILEYTWLEA) are extracellular. A helical membrane pass occupies residues 319–336 (VIFLIGIIVANVPEGLLA). Residues 337-770 (TVTVCLTLTA…EEGRLIFDNL (434 aa)) lie on the Cytoplasmic side of the membrane. The active-site 4-aspartylphosphate intermediate is the Asp374. Residues Ser450 and Ser482 each carry the phosphoserine modification. Lys485 provides a ligand contact to ATP. Tyr540 is modified (phosphotyrosine). The tract at residues 594-715 (RAAVPDAVGK…QGAIVAVTGD (122 aa)) is mediates interaction with SCN7A. The residue at position 666 (Ser666) is a Phosphoserine. Residues Asp715 and Asp719 each contribute to the Mg(2+) site. A helical transmembrane segment spans residues 771–790 (KKSIAYTLTSNIPEITPFLI). Residues 791 to 800 (FIIANIPLPL) are Extracellular-facing. A helical transmembrane segment spans residues 801-821 (GTVTILCIDLGTDMVPAISLA). Residues 822–841 (YEQAESDIMKRQPRNPQTDK) lie on the Cytoplasmic side of the membrane. Residues 842–864 (LVNERLISMAYGQIGMIQALGGF) form a helical membrane-spanning segment. Residues 865–916 (FTYFVIMAENGFLPNHLLGIRVTWDDRWINDVEDSYGQQWTYEQRKIVEFTC) lie on the Extracellular side of the membrane. Residues 917–936 (HTAFFVSIVVVQWADLVICK) traverse the membrane as a helical segment. The Cytoplasmic portion of the chain corresponds to 937–949 (TRRNSVFQQGMKN). A Phosphoserine; by PKA modification is found at Ser941. Residues 950–968 (KILIFGLFEETALAAFLSY) form a helical membrane-spanning segment. Topologically, residues 969–983 (CPGMGVALRMYPLKP) are extracellular. The helical transmembrane segment at 984-1004 (TWWFCAFPYSLLIFVYDEVRK) threads the bilayer. Residues 1005–1021 (LIIRRRPGGWVEKETYY) are Cytoplasmic-facing.

Belongs to the cation transport ATPase (P-type) (TC 3.A.3) family. Type IIC subfamily. In terms of assembly, the sodium/potassium-transporting ATPase is composed of a catalytic alpha subunit, an auxiliary non-catalytic beta subunit and an additional regulatory subunit. Interacts with regulatory subunit FXYD1. Interacts with regulatory subunit FXYD3. Interacts with SIK1. Interacts with SLC35G1 and STIM1. Interacts with CLN3; this interaction regulates the sodium/potassium-transporting ATPase complex localization at the plasma membrane. Interacts with SCN7A; activates ATP1A1 P-type sodium:potassium-exchanging transporter activity which indirectly signals to nearby neurons to regulate sodium homeostasis. Post-translationally, phosphorylation on Tyr-10 modulates pumping activity. Phosphorylation of Ser-941 by PKA modulates the response of ATP1A1 to PKC. Dephosphorylation by protein phosphatase 2A (PP2A) following increases in intracellular sodium, leading to increase catalytic activity.

It is found in the cell membrane. It localises to the basolateral cell membrane. The protein resides in the sarcolemma. Its subcellular location is the cell projection. The protein localises to the axon. It is found in the melanosome. The catalysed reaction is K(+)(out) + Na(+)(in) + ATP + H2O = K(+)(in) + Na(+)(out) + ADP + phosphate + H(+). Its activity is regulated as follows. Specifically inhibited by cardiac glycosides such as digoxin or ouabain. Its function is as follows. This is the catalytic component of the active enzyme, which catalyzes the hydrolysis of ATP coupled with the exchange of sodium and potassium ions across the plasma membrane. This action creates the electrochemical gradient of sodium and potassium ions, providing the energy for active transport of various nutrients. Could also be part of an osmosensory signaling pathway that senses body-fluid sodium levels and controls salt intake behavior as well as voluntary water intake to regulate sodium homeostasis. In Ovis aries (Sheep), this protein is Sodium/potassium-transporting ATPase subunit alpha-1 (ATP1A1).